The sequence spans 618 residues: Dihydroxy-acid dehydratase (618 aa).

Mg(2+) is bound at residue aspartate 81. Cysteine 122 lines the [2Fe-2S] cluster pocket. Aspartate 123 and lysine 124 together coordinate Mg(2+). Lysine 124 carries the N6-carboxylysine modification. Cysteine 195 provides a ligand contact to [2Fe-2S] cluster. Glutamate 491 contacts Mg(2+). Serine 517 (proton acceptor) is an active-site residue.

This sequence belongs to the IlvD/Edd family. As to quaternary structure, homodimer. It depends on [2Fe-2S] cluster as a cofactor. Mg(2+) serves as cofactor.

It catalyses the reaction (2R)-2,3-dihydroxy-3-methylbutanoate = 3-methyl-2-oxobutanoate + H2O. It carries out the reaction (2R,3R)-2,3-dihydroxy-3-methylpentanoate = (S)-3-methyl-2-oxopentanoate + H2O. It functions in the pathway amino-acid biosynthesis; L-isoleucine biosynthesis; L-isoleucine from 2-oxobutanoate: step 3/4. It participates in amino-acid biosynthesis; L-valine biosynthesis; L-valine from pyruvate: step 3/4. Functions in the biosynthesis of branched-chain amino acids. Catalyzes the dehydration of (2R,3R)-2,3-dihydroxy-3-methylpentanoate (2,3-dihydroxy-3-methylvalerate) into 2-oxo-3-methylpentanoate (2-oxo-3-methylvalerate) and of (2R)-2,3-dihydroxy-3-methylbutanoate (2,3-dihydroxyisovalerate) into 2-oxo-3-methylbutanoate (2-oxoisovalerate), the penultimate precursor to L-isoleucine and L-valine, respectively. The protein is Dihydroxy-acid dehydratase of Rhodopseudomonas palustris (strain ATCC BAA-98 / CGA009).